The sequence spans 84 residues: Envelope small membrane protein (84 aa).

The Virion surface portion of the chain corresponds to 1 to 18 (MFMADAYFADTVWYVGQI). The chain crosses the membrane as a helical span at residues 19–39 (IFIVAICLLVIIVVVAFLATF). The Intravirion portion of the chain corresponds to 40-80 (KLCIQLCGMCNTLGLSPSIYVFNRGRQFYEFYNDVKPPVLD).

Belongs to the betacoronaviruses E protein family. As to quaternary structure, homopentamer. Interacts with membrane protein M in the budding compartment of the host cell, which is located between endoplasmic reticulum and the Golgi complex. Interacts with Nucleoprotein.

It localises to the host Golgi apparatus membrane. Its function is as follows. Plays a central role in virus morphogenesis and assembly. Acts as a viroporin and self-assembles in host membranes forming pentameric protein-lipid pores that allow ion transport. Also plays a role in the induction of apoptosis. The protein is Envelope small membrane protein of Bos taurus (Bovine).